A 132-amino-acid chain; its full sequence is Fumarate reductase subunit C (132 aa).

3 helical membrane-spanning segments follow: residues 30-50, 70-90, and 110-130; these read ATSVFAVWFCIVLLYGVLCFA, IVVFLNIITLIATLYHTVTYF, and VVRNALWAVTALVSVIALVLV.

This sequence belongs to the FrdC family. As to quaternary structure, part of an enzyme complex containing four subunits: a flavoprotein (FrdA), an iron-sulfur protein (FrdB), and two hydrophobic anchor proteins (FrdC and FrdD).

The protein resides in the cell inner membrane. Its function is as follows. Anchors the catalytic components of the fumarate reductase complex to the cell membrane, binds quinones. The sequence is that of Fumarate reductase subunit C from Haemophilus influenzae (strain ATCC 51907 / DSM 11121 / KW20 / Rd).